The following is a 218-amino-acid chain: MSETAPVAAPAVSAPGAKAAAKKPKKAAGGAKPRKPAGPSVTELITKAVSASKERKGLSLAALKKALAAGGYDVEKNNSRIKLGLKSLVSKGTLVQTKGTGASGSFKLNKKPGETKAKATKKKPAAKPKKPAAKKPAAAAKKPKKAAAVKKSPKKAKKPAAAATKKAAKSPKKATKAGRPKKTAKSPAKAKAVKPKAAKSKAAKPKAAKAKKAATKKK.

The span at 1–19 (MSETAPVAAPAVSAPGAKA) shows a compositional bias: low complexity. 2 disordered regions span residues 1–42 (MSET…PSVT) and 89–218 (VSKG…TKKK). The residue at position 2 (Ser-2) is an N-acetylserine. The H15 domain maps to 37 to 110 (AGPSVTELIT…GASGSFKLNK (74 aa)). 4 stretches are compositionally biased toward basic residues: residues 118–133 (KATK…KPAA), 141–158 (KKPK…KAKK), 166–184 (KAAK…KKTA), and 191–218 (KAVK…TKKK).

This sequence belongs to the histone H1/H5 family.

It localises to the nucleus. It is found in the chromosome. In terms of biological role, histones H1 are necessary for the condensation of nucleosome chains into higher-order structures. This chain is Histone H1, found in Gallus gallus (Chicken).